Reading from the N-terminus, the 152-residue chain is Large ribosomal subunit protein uL13 (152 aa).

Positions 133 to 152 are disordered; sequence EHPHQAQKPQPLTINTIPGA. Over residues 139–152 the composition is skewed to polar residues; sequence QKPQPLTINTIPGA.

The protein belongs to the universal ribosomal protein uL13 family. Part of the 50S ribosomal subunit.

Its function is as follows. This protein is one of the early assembly proteins of the 50S ribosomal subunit, although it is not seen to bind rRNA by itself. It is important during the early stages of 50S assembly. In Thermosynechococcus vestitus (strain NIES-2133 / IAM M-273 / BP-1), this protein is Large ribosomal subunit protein uL13.